The chain runs to 366 residues: Glutamate 5-kinase (366 aa).

Lysine 17 contacts ATP. Substrate contacts are provided by serine 57, aspartate 144, and asparagine 156. ATP contacts are provided by residues 176–177 (SD) and 216–222 (TGGMVSK). Residues 278 to 356 (SGALTLDDGA…SDLPAEMRRP (79 aa)) enclose the PUA domain.

It belongs to the glutamate 5-kinase family.

The protein localises to the cytoplasm. It catalyses the reaction L-glutamate + ATP = L-glutamyl 5-phosphate + ADP. The protein operates within amino-acid biosynthesis; L-proline biosynthesis; L-glutamate 5-semialdehyde from L-glutamate: step 1/2. Its function is as follows. Catalyzes the transfer of a phosphate group to glutamate to form L-glutamate 5-phosphate. This is Glutamate 5-kinase from Mycolicibacterium vanbaalenii (strain DSM 7251 / JCM 13017 / BCRC 16820 / KCTC 9966 / NRRL B-24157 / PYR-1) (Mycobacterium vanbaalenii).